A 156-amino-acid chain; its full sequence is Small ribosomal subunit protein uS7 (156 aa).

Belongs to the universal ribosomal protein uS7 family. In terms of assembly, part of the 30S ribosomal subunit. Contacts proteins S9 and S11.

In terms of biological role, one of the primary rRNA binding proteins, it binds directly to 16S rRNA where it nucleates assembly of the head domain of the 30S subunit. Is located at the subunit interface close to the decoding center, probably blocks exit of the E-site tRNA. In Carboxydothermus hydrogenoformans (strain ATCC BAA-161 / DSM 6008 / Z-2901), this protein is Small ribosomal subunit protein uS7.